The chain runs to 27 residues: Augerpeptide hhe6.2 (27 aa).

3 disulfides stabilise this stretch: cysteine 4–cysteine 13, cysteine 8–cysteine 20, and cysteine 12–cysteine 27.

As to expression, expressed by the venom duct.

The protein resides in the secreted. This Hastula hectica (Sea snail) protein is Augerpeptide hhe6.2.